We begin with the raw amino-acid sequence, 529 residues long: Beta-hexosaminidase subunit alpha (529 aa).

Positions 1-22 (MTSSRLWFSLLLAAAFAGRATA) are cleaved as a signal peptide. A propeptide spanning residues 23-88 (LWPWPQNFQT…PRPYLTGKRH (66 aa)) is cleaved from the precursor. Cys58 and Cys104 are joined by a disulfide. 3 N-linked (GlcNAc...) asparagine glycosylation sites follow: Asn115, Asn157, and Asn295. An intrachain disulfide couples Cys277 to Cys328. Glu323 functions as the Proton donor in the catalytic mechanism. Residues 423 to 424 (NR) are critical for hydrolysis GM2 gangliosides. An intrachain disulfide couples Cys505 to Cys522.

Belongs to the glycosyl hydrolase 20 family. As to quaternary structure, there are 3 beta-hexosaminidase isozymes: isozyme A (hexosaminidase A) is a heterodimer composed of one subunit alpha and one subunit beta (chain A and B); isozyme B (hexosaminidase B) is a homodimer of two beta subunits (two chains A and B); isozyme S (hexosaminidase S) is a homodimer of two alpha subunits. The composition of the dimer (isozyme A versus isozyme S) has a significant effect on the substrate specificity of the alpha subunit active site. Post-translationally, N-linked glycan at Asn-115 consists of Man(3)-GlcNAc(2). N-linked glycan at Asn-157 consists of either GlcNAc or GlcNAc(2)-Man(7-9). N-linked glycan at Asn-295 consists of either GlcNAc, GlcNAc-Fuc, or GlcNAc(2)-Man(4).

The protein localises to the lysosome. The catalysed reaction is Hydrolysis of terminal non-reducing N-acetyl-D-hexosamine residues in N-acetyl-beta-D-hexosaminides.. It carries out the reaction N-acetyl-beta-D-galactosaminyl-(1-&gt;4)-beta-D-3-sulfogalactosyl-(1-&gt;4)-beta-D-glucosyl-(1&lt;-&gt;1')-ceramide + H2O = a beta-D-3-sulfogalactosyl-(1-&gt;4)-beta-D-glucosyl-(1&lt;-&gt;1')-ceramide + N-acetyl-beta-D-galactosamine. It catalyses the reaction a ganglioside GM2 (d18:1(4E)) + H2O = a ganglioside GM3 (d18:1(4E)) + N-acetyl-beta-D-galactosamine. The enzyme catalyses a ganglioside GM2 + H2O = a ganglioside GM3 + N-acetyl-beta-D-galactosamine. The catalysed reaction is beta-D-GalNAc-(1-&gt;4)-alpha-L-IdoA-(1-&gt;3)-beta-D-GalNAc-4-sulfate-(1-&gt;4)-alpha-L-IdoA-(1-&gt;3)-D-GalNAc-4-sulfate + H2O = alpha-L-IdoA-(1-&gt;3)-beta-D-GalNAc-4-sulfate-(1-&gt;4)-alpha-L-IdoA-(1-&gt;3)-D-GalNAc-4-sulfate + N-acetyl-D-galactosamine. It carries out the reaction N-acetyl-beta-D-6-sulfogalactosaminyl-(1-&gt;4)-alpha-L-iduronyl-(1-&gt;3)-N-acetyl-D-6-sulfogalactosamine + H2O = alpha-L-iduronyl-(1-&gt;3)-N-acetyl-D-6-sulfogalactosamine + N-acetyl-D-6-sulfogalactosamine. Addition of GM2A stimulates the hydrolysis of sulfated glycosphingolipid SM2 and the ganglioside GM2. Its function is as follows. Hydrolyzes the non-reducing end N-acetyl-D-hexosamine and/or sulfated N-acetyl-D-hexosamine of glycoconjugates, such as the oligosaccharide moieties from proteins and neutral glycolipids, or from certain mucopolysaccharides. The isozyme S is as active as the isozyme A on the anionic bis-sulfated glycans, the chondroitin-6-sulfate trisaccharide (C6S-3), and the dermatan sulfate pentasaccharide, and the sulfated glycosphingolipid SM2. The isozyme B does not hydrolyze each of these substrates, however hydrolyzes efficiently neutral oligosaccharide. Only the isozyme A is responsible for the degradation of GM2 gangliosides in the presence of GM2A. In Homo sapiens (Human), this protein is Beta-hexosaminidase subunit alpha.